The sequence spans 189 residues: Large ribosomal subunit protein bL17 (189 aa).

A disordered region spans residues 126–189; it reads DRARRVKASQ…DADADEAPQN (64 aa). The span at 139–180 shows a compositional bias: low complexity; it reads QDAPSEPQAAEEPAAEEAVAATEAVAAPADAEATDAEAGSAD.

It belongs to the bacterial ribosomal protein bL17 family. Part of the 50S ribosomal subunit. Contacts protein L32.

The chain is Large ribosomal subunit protein bL17 from Mycobacterium marinum (strain ATCC BAA-535 / M).